The sequence spans 331 residues: tRNA N6-adenosine threonylcarbamoyltransferase (331 aa).

The Fe cation site is built by H109, H113, and Y130. Residues 130–134 (YLSGG), D162, D183, and S262 each bind substrate. D290 contacts Fe cation.

It belongs to the KAE1 / TsaD family. Fe(2+) serves as cofactor.

It is found in the cytoplasm. The catalysed reaction is L-threonylcarbamoyladenylate + adenosine(37) in tRNA = N(6)-L-threonylcarbamoyladenosine(37) in tRNA + AMP + H(+). In terms of biological role, required for the formation of a threonylcarbamoyl group on adenosine at position 37 (t(6)A37) in tRNAs that read codons beginning with adenine. Is probably involved in the transfer of the threonylcarbamoyl moiety of threonylcarbamoyl-AMP (TC-AMP) to the N6 group of A37. This chain is tRNA N6-adenosine threonylcarbamoyltransferase, found in Saccharolobus islandicus (strain M.16.27) (Sulfolobus islandicus).